A 432-amino-acid chain; its full sequence is Mannose-6-phosphate isomerase 1 (432 aa).

Met-1 is modified (N-acetylmethionine). Positions 124, 126, 151, and 288 each coordinate Zn(2+). The active site involves Arg-307.

Belongs to the mannose-6-phosphate isomerase type 1 family. Requires Zn(2+) as cofactor. As to expression, constitutively expressed in both vegetative and reproductive organs under normal growth conditions (at protein level).

It catalyses the reaction D-mannose 6-phosphate = D-fructose 6-phosphate. It participates in nucleotide-sugar biosynthesis; GDP-alpha-D-mannose biosynthesis; alpha-D-mannose 1-phosphate from D-fructose 6-phosphate: step 1/2. Its activity is regulated as follows. Inhibited by EDTA, Zn(2+), Cd(2+), Co(2+), p-chloromercuribenzoate and L-ascorbic acid (AsA). Its function is as follows. Phosphomannose isomerase involved in the synthesis of the GDP-mannose and dolichol-phosphate-mannose required for a number of critical mannosyl transfer reactions. Involved in the ascorbic acid (AsA) biosynthesis. Required during the endosperm development. This is Mannose-6-phosphate isomerase 1 (PMI1) from Arabidopsis thaliana (Mouse-ear cress).